Consider the following 248-residue polypeptide: Caffeoyl-CoA O-methyltransferase 3 (248 aa).

Substrate is bound at residue lysine 22. S-adenosyl-L-methionine-binding positions include threonine 64, glutamate 86, 88–89, serine 94, aspartate 112, and alanine 141; that span reads GV. Aspartate 164 is a binding site for substrate. Aspartate 164 is a binding site for a divalent metal cation. Aspartate 166 lines the S-adenosyl-L-methionine pocket. Positions 190 and 191 each coordinate a divalent metal cation. Asparagine 195 is a binding site for substrate.

It belongs to the class I-like SAM-binding methyltransferase superfamily. Cation-dependent O-methyltransferase family. CCoAMT subfamily. The cofactor is a divalent metal cation. In terms of tissue distribution, mostly expressed in petal limbs and tubes, and, at low levels, in stems, roots and leaves.

It is found in the cytoplasm. The protein resides in the cytosol. The enzyme catalyses (E)-caffeoyl-CoA + S-adenosyl-L-methionine = (E)-feruloyl-CoA + S-adenosyl-L-homocysteine + H(+). The catalysed reaction is (E)-5-hydroxyferuloyl-CoA + S-adenosyl-L-methionine = (E)-sinapoyl-CoA + S-adenosyl-L-homocysteine + H(+). It participates in aromatic compound metabolism; phenylpropanoid biosynthesis. Its function is as follows. Involved in the production of floral volatile phenylpropanoids in flowers of fragrant cultivars (e.g. cv. Mitchell and cv. V26) from cinnamic acid, a common precursor with the anthocyanin biosynthesis pathway involved in flower pigmentation. Methylates caffeoyl-CoA to feruloyl-CoA, also able to methylate 5-hydroxyferuloyl-CoA. This is Caffeoyl-CoA O-methyltransferase 3 from Petunia hybrida (Petunia).